We begin with the raw amino-acid sequence, 204 residues long: Recombination protein RecR (204 aa).

Residues 63 to 78 (CNRCFNITVEDPCTIC) form a C4-type zinc finger. The 96-residue stretch at 86–181 (RQVCVVEEPL…RVTRLARGLP (96 aa)) folds into the Toprim domain.

The protein belongs to the RecR family.

In terms of biological role, may play a role in DNA repair. It seems to be involved in an RecBC-independent recombinational process of DNA repair. It may act with RecF and RecO. The protein is Recombination protein RecR of Herpetosiphon aurantiacus (strain ATCC 23779 / DSM 785 / 114-95).